The following is an 83-amino-acid chain: Mu-theraphotoxin-Hhn2n (83 aa).

A signal peptide spans 1 to 21; it reads MKASMYLALAGLVLLFVVGYA. Positions 22–48 are excised as a propeptide; sequence SESEEKEFPRELLSKIFAVDDFKGEER. Cystine bridges form between C50–C65, C57–C70, and C64–C77. Residue L81 is modified to Leucine amide.

The protein belongs to the neurotoxin 10 (Hwtx-1) family. 15 (Hntx-3) subfamily. In terms of assembly, monomer. As to expression, expressed by the venom gland.

Its subcellular location is the secreted. Its function is as follows. Lethal neurotoxin. Selectively blocks tetrodotoxin-sensitive voltage-gated sodium channels (Nav). Does not affect tetrodotoxin-resistant voltage-gated sodium channels or calcium channels. In Cyriopagopus hainanus (Chinese bird spider), this protein is Mu-theraphotoxin-Hhn2n.